Here is a 495-residue protein sequence, read N- to C-terminus: Glycerol kinase (495 aa).

Threonine 13 is a binding site for ADP. Residues threonine 13, threonine 14, and serine 15 each coordinate ATP. Threonine 13 is a binding site for sn-glycerol 3-phosphate. Position 17 (arginine 17) interacts with ADP. Sn-glycerol 3-phosphate-binding residues include arginine 83, glutamate 84, tyrosine 135, and aspartate 244. Residues arginine 83, glutamate 84, tyrosine 135, aspartate 244, and glutamine 245 each coordinate glycerol. Residues threonine 266 and glycine 309 each contribute to the ADP site. ATP contacts are provided by threonine 266, glycine 309, glutamine 313, and glycine 410. Residues glycine 410 and asparagine 414 each contribute to the ADP site.

The protein belongs to the FGGY kinase family.

The enzyme catalyses glycerol + ATP = sn-glycerol 3-phosphate + ADP + H(+). It functions in the pathway polyol metabolism; glycerol degradation via glycerol kinase pathway; sn-glycerol 3-phosphate from glycerol: step 1/1. Its activity is regulated as follows. Inhibited by fructose 1,6-bisphosphate (FBP). Its function is as follows. Key enzyme in the regulation of glycerol uptake and metabolism. Catalyzes the phosphorylation of glycerol to yield sn-glycerol 3-phosphate. The chain is Glycerol kinase from Shewanella amazonensis (strain ATCC BAA-1098 / SB2B).